The sequence spans 208 residues: Molybdenum cofactor guanylyltransferase (208 aa).

GTP is bound by residues 10–12 (LAG), K23, D69, and D103. Residue D103 coordinates Mg(2+).

It belongs to the MobA family. Monomer. It depends on Mg(2+) as a cofactor.

Its subcellular location is the cytoplasm. The catalysed reaction is Mo-molybdopterin + GTP + H(+) = Mo-molybdopterin guanine dinucleotide + diphosphate. Its function is as follows. Transfers a GMP moiety from GTP to Mo-molybdopterin (Mo-MPT) cofactor (Moco or molybdenum cofactor) to form Mo-molybdopterin guanine dinucleotide (Mo-MGD) cofactor. In Mesorhizobium japonicum (strain LMG 29417 / CECT 9101 / MAFF 303099) (Mesorhizobium loti (strain MAFF 303099)), this protein is Molybdenum cofactor guanylyltransferase.